Here is a 1684-residue protein sequence, read N- to C-terminus: Protein Wiz (1684 aa).

The tract at residues 1–77 (MEGLLAGGLA…PGLSEALPRA (77 aa)) is disordered. The span at 13–24 (DHPRGPAPREDI) shows a compositional bias: basic and acidic residues. 5 consecutive C2H2-type zinc fingers follow at residues 308-330 (FPCI…MSQH), 345-367 (LACS…WQLH), 454-477 (NTCV…RLVH), 734-756 (RKCP…VRGH), and 802-824 (MRCD…ARAH). Residues 854–876 (LPPSPLGREPGGPPRSFLTSRRP) form a disordered region. A C2H2-type 6 zinc finger spans residues 903–925 (TTCEVCGACFETRKGLSSHARSH). Residues lysine 916, lysine 972, lysine 988, lysine 1000, and lysine 1021 each participate in a glycyl lysine isopeptide (Lys-Gly) (interchain with G-Cter in SUMO2) cross-link. Residues 1005–1072 (FSAKGLTHPS…PLNLTSGPEP (68 aa)) form a disordered region. Serine 1029 carries the post-translational modification Phosphoserine. Threonine 1031 is subject to Phosphothreonine. Glycyl lysine isopeptide (Lys-Gly) (interchain with G-Cter in SUMO2) cross-links involve residues lysine 1033 and lysine 1038. Serine 1039 and serine 1045 each carry phosphoserine. Polar residues predominate over residues 1040–1057 (PQLSLSPRPTSPKAQWPQ). A Phosphothreonine modification is found at threonine 1049. Phosphoserine is present on residues serine 1050 and serine 1058. Positions 1063–1067 (PLNLT) are interaction with CTBP1 and CTBP2 1. The C2H2-type 7 zinc-finger motif lies at 1076 to 1098 (IRCEFCGEFFENRKGLSSHARSH). Residue lysine 1089 forms a Glycyl lysine isopeptide (Lys-Gly) (interchain with G-Cter in SUMO2) linkage. Residues serine 1112 and serine 1139 each carry the phosphoserine modification. A disordered region spans residues 1127-1208 (SRPGGHLHPP…GLATPSLPKK (82 aa)). Glycyl lysine isopeptide (Lys-Gly) (interchain with G-Cter in SUMO2) cross-links involve residues lysine 1141 and lysine 1145. Phosphoserine occurs at positions 1155, 1160, and 1167. Residues lysine 1171 and lysine 1172 each participate in a glycyl lysine isopeptide (Lys-Gly) (interchain with G-Cter in SUMO2) cross-link. Phosphoserine is present on residues serine 1179 and serine 1184. The residue at position 1195 (lysine 1195) is an N6,N6,N6-trimethyllysine; by EHMT2; alternate. Lysine 1195 bears the N6,N6-dimethyllysine; by EHMT2; alternate mark. Lysine 1210 participates in a covalent cross-link: Glycyl lysine isopeptide (Lys-Gly) (interchain with G-Cter in SUMO2). Positions 1247 to 1251 (PLNLS) are interaction with CTBP1 and CTBP2 2. A C2H2-type 8 zinc finger spans residues 1260–1282 (IRCEFCGEFFENRKGLSSHARSH). A Glycyl lysine isopeptide (Lys-Gly) (interchain with G-Cter in SUMO2) cross-link involves residue lysine 1273. Serine 1296 is modified (phosphoserine). Lysine 1315 is covalently cross-linked (Glycyl lysine isopeptide (Lys-Gly) (interchain with G-Cter in SUMO2)). The disordered stretch occupies residues 1320–1384 (AGDLAPALTE…SKPSAASYLG (65 aa)). Positions 1335–1351 (AAPGALHSPLPLSPLAS) are enriched in low complexity. Residues serine 1342 and serine 1347 each carry the phosphoserine modification. Residues lysine 1376, lysine 1389, lysine 1403, lysine 1405, and lysine 1415 each participate in a glycyl lysine isopeptide (Lys-Gly) (interchain with G-Cter in SUMO2) cross-link. The C2H2-type 9 zinc finger occupies 1430–1452 (ACCELCGLYFENRKALASHARAH). Glycyl lysine isopeptide (Lys-Gly) (interchain with G-Cter in SUMO2) cross-links involve residues lysine 1481, lysine 1497, and lysine 1510. Disordered regions lie at residues 1496-1587 (TKKF…GEEV) and 1592-1611 (QKLE…PSLV). Serine 1550 is subject to Phosphoserine. Residue lysine 1556 forms a Glycyl lysine isopeptide (Lys-Gly) (interchain with G-Cter in SUMO1); alternate linkage. Lysine 1556 is covalently cross-linked (Glycyl lysine isopeptide (Lys-Gly) (interchain with G-Cter in SUMO2); alternate). The span at 1556 to 1574 (KSEEHQRQNINKFERRQAR) shows a compositional bias: basic and acidic residues. Glycyl lysine isopeptide (Lys-Gly) (interchain with G-Cter in SUMO2) cross-links involve residues lysine 1567 and lysine 1593. A compositionally biased stretch (pro residues) spans 1599–1611 (QPPPRVRPVPSLV). The C2H2-type 10 zinc-finger motif lies at 1629-1655 (LKCRFCEVEFQGPLSIQEEWVRHLQRH). The tract at residues 1662–1684 (SKADPPPEEPQAPQAQTAAVEAP) is disordered. Lysine 1663 is covalently cross-linked (Glycyl lysine isopeptide (Lys-Gly) (interchain with G-Cter in SUMO2)). Over residues 1672–1684 (QAPQAQTAAVEAP) the composition is skewed to low complexity.

The protein belongs to the krueppel C2H2-type zinc-finger protein family. As to quaternary structure, part of a complex containing at least CDYL, REST, WIZ, SETB1, EHMT1 and EHMT2. Interacts with EHMT1, EHMT2, CTBP1 and CTBP2. In terms of tissue distribution, according to PubMed:9795207, isoform L and isoform S are brain-specific. According to PubMed:16702210, isoform S is ubiquitously expressed.

It is found in the nucleus. Functionally, may link EHMT1 and EHMT2 histone methyltransferases to the CTBP corepressor machinery. May be involved in EHMT1-EHMT2 heterodimer formation and stabilization. This Mus musculus (Mouse) protein is Protein Wiz (Wiz).